We begin with the raw amino-acid sequence, 344 residues long: GTPase Obg (344 aa).

Residues 1-159 form the Obg domain; sequence MKFLDLAKVY…RTIWLRLKLI (159 aa). One can recognise an OBG-type G domain in the interval 160-326; it reads ADVGLLGLPN…VLRVLRARVD (167 aa). GTP-binding positions include 166–173, 191–195, 212–215, 279–282, and 307–309; these read GLPNAGKS, FTTLV, DIPG, NKID, and SGV. Mg(2+) contacts are provided by serine 173 and threonine 193.

This sequence belongs to the TRAFAC class OBG-HflX-like GTPase superfamily. OBG GTPase family. In terms of assembly, monomer. Mg(2+) is required as a cofactor.

The protein localises to the cytoplasm. An essential GTPase which binds GTP, GDP and possibly (p)ppGpp with moderate affinity, with high nucleotide exchange rates and a fairly low GTP hydrolysis rate. Plays a role in control of the cell cycle, stress response, ribosome biogenesis and in those bacteria that undergo differentiation, in morphogenesis control. The polypeptide is GTPase Obg (Jannaschia sp. (strain CCS1)).